A 276-amino-acid chain; its full sequence is Biotin synthase (276 aa).

In terms of domain architecture, Radical SAM core spans 1–226; the sequence is MKKIYLCAIS…EAIIMLAGGR (226 aa). [4Fe-4S] cluster-binding residues include Cys-17, Cys-21, and Cys-24. 3 residues coordinate [2Fe-2S] cluster: Cys-61, Cys-95, and Cys-153.

The protein belongs to the radical SAM superfamily. Biotin synthase family. As to quaternary structure, homodimer. It depends on [4Fe-4S] cluster as a cofactor. [2Fe-2S] cluster serves as cofactor.

The enzyme catalyses (4R,5S)-dethiobiotin + (sulfur carrier)-SH + 2 reduced [2Fe-2S]-[ferredoxin] + 2 S-adenosyl-L-methionine = (sulfur carrier)-H + biotin + 2 5'-deoxyadenosine + 2 L-methionine + 2 oxidized [2Fe-2S]-[ferredoxin]. Its pathway is cofactor biosynthesis; biotin biosynthesis; biotin from 7,8-diaminononanoate: step 2/2. In terms of biological role, catalyzes the conversion of dethiobiotin (DTB) to biotin by the insertion of a sulfur atom into dethiobiotin via a radical-based mechanism. The chain is Biotin synthase from Nautilia profundicola (strain ATCC BAA-1463 / DSM 18972 / AmH).